A 776-amino-acid chain; its full sequence is 5-methyltetrahydropteroyltriglutamate--homocysteine methyltransferase (776 aa).

Residues 16–19 (RELK) and Lys112 each bind 5-methyltetrahydropteroyltri-L-glutamate. L-homocysteine is bound by residues 435 to 437 (IGS) and Glu488. Residues 435–437 (IGS) and Glu488 each bind L-methionine. Residues 519 to 520 (RC) and Trp565 contribute to the 5-methyltetrahydropteroyltri-L-glutamate site. Asp603 provides a ligand contact to L-homocysteine. Residue Asp603 participates in L-methionine binding. Position 609 (Glu609) interacts with 5-methyltetrahydropteroyltri-L-glutamate. Zn(2+) is bound by residues His645, Cys647, and Glu669. His698 serves as the catalytic Proton donor. A Zn(2+)-binding site is contributed by Cys730.

Belongs to the vitamin-B12 independent methionine synthase family. Zn(2+) is required as a cofactor.

The enzyme catalyses 5-methyltetrahydropteroyltri-L-glutamate + L-homocysteine = tetrahydropteroyltri-L-glutamate + L-methionine. It participates in amino-acid biosynthesis; L-methionine biosynthesis via de novo pathway; L-methionine from L-homocysteine (MetE route): step 1/1. Catalyzes the transfer of a methyl group from 5-methyltetrahydrofolate to homocysteine resulting in methionine formation. The protein is 5-methyltetrahydropteroyltriglutamate--homocysteine methyltransferase of Ralstonia pickettii (strain 12J).